The sequence spans 2547 residues: Lovastatin diketide synthase mokB (2547 aa).

The Ketosynthase family 3 (KS3) domain maps to 10–430 (PTPIAVVGMG…GANAHAIVER (421 aa)). Active-site for beta-ketoacyl synthase activity residues include Cys-183, His-318, and His-353. The interval 545-890 (VFTGQGAQWF…MDLLQGGYPV (346 aa)) is acyl and malonyl transferase. Ser-635 acts as the For malonyltransferase activity in catalysis. Positions 941–1079 (HDLIGVQEPL…GLIRAQVDHP (139 aa)) are N-terminal hotdog fold. Positions 941 to 1252 (HDLIGVQEPL…FQSLGAVISD (312 aa)) constitute a PKS/mFAS DH domain. His-973 (proton acceptor; for dehydratase activity) is an active-site residue. Residues 973–985 (HVVGSRILFPGAG) are dehydratase-like. A C-terminal hotdog fold region spans residues 1095–1252 (SRKMAPQDLW…FQSLGAVISD (158 aa)). Asp-1160 functions as the Proton donor; for dehydratase activity in the catalytic mechanism. Cys-1340 and Cys-1379 form a disulfide bridge. Residues 1510–1547 (YDVVLACQVLHATSNMQRTLNNVRKLLKPGGKLILVET) form a methyltransferase region. The Carrier domain maps to 2459 to 2541 (ASTEEEATAL…EVAEVVVKKY (83 aa)). Ser-2501 is subject to O-(pantetheine 4'-phosphoryl)serine.

Pantetheine 4'-phosphate is required as a cofactor.

The catalysed reaction is holo-[2-methylbutanoate polyketide synthase] + 2 malonyl-CoA + S-adenosyl-L-methionine + 2 NADPH + 3 H(+) = (S)-2-methylbutanoyl-[2-methylbutanoate polyketide synthase] + S-adenosyl-L-homocysteine + 2 CO2 + 2 NADP(+) + 2 CoA + H2O. It functions in the pathway polyketide biosynthesis; lovastatin biosynthesis. In terms of biological role, diketide synthase; part of the gene cluster that mediates the biosynthesis of monakolin K, also known as lovastatin, and which acts as a potent competitive inhibitor of HMG-CoA reductase. Monakolin K biosynthesis is performed in two stages. The first stage is catalyzed by the nonaketide synthase mokA, which belongs to type I polyketide synthases and catalyzes the iterative nine-step formation of the polyketide. This PKS stage completed by the action of dehydrogenase mokE, which catalyzes the NADPH-dependent reduction of the unsaturated tetra-, penta- and heptaketide intermediates that arise during the mokA-mediated biosynthesis of the nonaketide chain and leads to dihydromonacolin L. Covalently bound dihydromonacolin L is released from mokA by the mokD esterase. Conversion of dihydromonacolin L into monacolin L and then monacolin J is subsequently performed with the participation of molecular oxygen and P450 monoogygenase mokC. Finally, mokF performs the conversion of monacoline J to monacoline K through the addition of the side-chain diketide moiety (2R)-2-methylbutanoate produced by the diketide synthase mokB. In Monascus pilosus (Red mold), this protein is Lovastatin diketide synthase mokB.